The sequence spans 1489 residues: FERM domain-containing protein C (1489 aa).

Composition is skewed to polar residues over residues 59-79 and 103-118; these read DTES…NFNS and NSPL…STSI. Disordered stretches follow at residues 59-86, 103-197, 252-271, and 277-312; these read DTES…HQHL, NSPL…PSTL, NSVQ…NNNN, and EQQQ…TPDS. Over residues 131 to 153 the composition is skewed to low complexity; sequence SSSSSSSDGDSNSSSDSSDNSSE. Positions 163 to 172 are enriched in basic residues; the sequence is HLHLHRHHRK. Low complexity predominate over residues 181 to 195; sequence FESSSESSEQYGSPS. Residues 202-289 adopt a coiled-coil conformation; sequence ALKLEKIMQI…QEKQQQQQQH (88 aa). Residues 277–287 are compositionally biased toward low complexity; the sequence is EQQQEKQQQQQ. Residues 303-312 are compositionally biased toward polar residues; it reads RSVSISTPDS. Residues 356–383 adopt a coiled-coil conformation; sequence IKVSKVLEEEMQLQQEFEKQEQLRHSAR. 3 disordered regions span residues 396-435, 459-479, and 508-569; these read NLQD…ENQN, VITP…KILT, and EDPL…TTTT. Positions 421–435 are enriched in low complexity; that stretch reads ENVSNDNSSDNENQN. Positions 545–555 are enriched in polar residues; that stretch reads TASSSSSPTLQ. Residues 556-569 are compositionally biased toward low complexity; the sequence is ATKTTTTTTTTTTT. An FERM domain is found at 637–934; sequence ILVHISLVDQ…GYKYFIQHDE (298 aa). LRR repeat units follow at residues 1017–1040, 1053–1075, 1087–1110, 1111–1133, 1167–1191, 1196–1219, 1254–1278, 1282–1306, 1339–1362, 1367–1391, 1395–1418, 1428–1450, and 1451–1474; these read KVEL…LKDT, ENLN…AFEP, HLNL…IEKY, PNIE…VILR, NKTI…IFEG, SLSL…KFIK, SCHI…VIKG, NQTI…LCQS, NKTI…AIGT, NETL…ILNG, NSTI…SLAN, VITL…QLST, and NIPI…IKNA.

This is FERM domain-containing protein C (frmC) from Dictyostelium discoideum (Social amoeba).